The primary structure comprises 259 residues: Cysteine protease IpaJ (259 aa).

Residues Cys64, His206, and Asp218 contribute to the active site.

It localises to the secreted. The protein resides in the host cytoplasm. Virulence factor that eliminates N-myristoyl protein modifications in infected host cells. Acts as a cysteine protease that cleaves the peptide bond between N-myristoylated Gly-2 and Asn-3 of human ARF1, leading to the elimination of the myristoyl group and alteration of protein trafficking in host cell. Could also cleave an array of N-myristoylated host proteins involved in cellular growth, signal transduction, autophagasome maturation and organelle function. The sequence is that of Cysteine protease IpaJ (ipaJ) from Shigella flexneri.